The chain runs to 342 residues: N-acetyl-gamma-glutamyl-phosphate reductase (342 aa).

Residue Cys149 is part of the active site.

The protein belongs to the NAGSA dehydrogenase family. Type 1 subfamily.

The protein localises to the cytoplasm. The enzyme catalyses N-acetyl-L-glutamate 5-semialdehyde + phosphate + NADP(+) = N-acetyl-L-glutamyl 5-phosphate + NADPH + H(+). Its pathway is amino-acid biosynthesis; L-arginine biosynthesis; N(2)-acetyl-L-ornithine from L-glutamate: step 3/4. Its function is as follows. Catalyzes the NADPH-dependent reduction of N-acetyl-5-glutamyl phosphate to yield N-acetyl-L-glutamate 5-semialdehyde. The sequence is that of N-acetyl-gamma-glutamyl-phosphate reductase from Nitrosomonas europaea (strain ATCC 19718 / CIP 103999 / KCTC 2705 / NBRC 14298).